A 315-amino-acid polypeptide reads, in one-letter code: Ribosomal RNA small subunit methyltransferase H (315 aa).

S-adenosyl-L-methionine contacts are provided by residues 37-39, Asp57, Phe83, Asp105, and Gln112; that span reads GGH.

The protein belongs to the methyltransferase superfamily. RsmH family.

It is found in the cytoplasm. It carries out the reaction cytidine(1402) in 16S rRNA + S-adenosyl-L-methionine = N(4)-methylcytidine(1402) in 16S rRNA + S-adenosyl-L-homocysteine + H(+). In terms of biological role, specifically methylates the N4 position of cytidine in position 1402 (C1402) of 16S rRNA. In Pseudomonas putida (strain ATCC 700007 / DSM 6899 / JCM 31910 / BCRC 17059 / LMG 24140 / F1), this protein is Ribosomal RNA small subunit methyltransferase H.